The chain runs to 132 residues: ATP synthase epsilon chain, cyanelle (132 aa).

This sequence belongs to the ATPase epsilon chain family. As to quaternary structure, F-type ATPases have 2 components, CF(1) - the catalytic core - and CF(0) - the membrane proton channel. CF(1) has five subunits: alpha(3), beta(3), gamma(1), delta(1), epsilon(1). CF(0) has three main subunits: a, b and c.

It is found in the plastid. It localises to the cyanelle thylakoid membrane. In terms of biological role, produces ATP from ADP in the presence of a proton gradient across the membrane. This is ATP synthase epsilon chain, cyanelle from Cyanophora paradoxa.